The following is a 497-amino-acid chain: Catalase-2 (497 aa).

Active-site residues include H71 and N144. Y354 is a heme binding site.

This sequence belongs to the catalase family. It depends on heme as a cofactor.

It catalyses the reaction 2 H2O2 = O2 + 2 H2O. Its function is as follows. Catalase involved in the oxidative stress response serving to protect cells from toxicity. For instance plays a role in defending against oxidative damage induced by excessive copper stress. Not required for maintaining normal lifespan. This is Catalase-2 from Caenorhabditis elegans.